Here is a 513-residue protein sequence, read N- to C-terminus: MLTRVKSAVANFMGGIMAGSSGSEHGGSGCGGSDLPLRFPYGRPEFLGLSQDEVECSADHIARPILILKETRRLPWATGYAEVINAGKSTHNEDQASCEVLTVKKKAGTITSTPNRNSKRRSSLPNGEGLQLKENSESEGISCHYWSLFDGHAGSGAAVVASRLLQHHITQQLQDIVEILKNSAILPPTCLGEEPESTPAHGRTLTRAASLRGGVGAPGSPSTPPTRFFTEKKIPHECLVIGALESAFKEMDLQIERERSAYNISGGCTALIVVCLLGKLYVANAGDSRAIIIRNGEIIPMSSEFTPETERQRLQYLAFMQPHLLGNEFTHLEFPRRVQRKELGKKMLYRDFNMTGWAYKTIEDDDLKFPLIYGEGKKARVMATIGVTRGLGDHDLKVHDSNIYIKPFLSSAPEVRVYDLSRYEHGADDVLILATDGLWDVLSNEEVAEAITQFLPNCDPDDPHRYTLAAQDLVMRARGVLKDRGWRISNDRLGSGDDISVYVIPLIHGNKLS.

Ser7 bears the Phosphoserine mark. The PPM-type phosphatase domain occupies 77 to 506; the sequence is ATGYAEVINA…DDISVYVIPL (430 aa). A disordered region spans residues 109–133; sequence TITSTPNRNSKRRSSLPNGEGLQLK. Residue Thr113 is modified to Phosphothreonine. Phosphoserine occurs at positions 123 and 210. Arg212 carries the post-translational modification Omega-N-methylarginine. A Phosphoserine modification is found at Ser220. The residue at position 223 (Thr223) is a Phosphothreonine. Position 421 is a phosphoserine (Ser421).

This sequence belongs to the PP2C family.

The protein resides in the nucleus. It localises to the cytoplasm. The catalysed reaction is O-phospho-L-seryl-[protein] + H2O = L-seryl-[protein] + phosphate. It carries out the reaction O-phospho-L-threonyl-[protein] + H2O = L-threonyl-[protein] + phosphate. Its function is as follows. Dephosphorylates CDKN1B at 'Thr-187', thus removing a signal for proteasomal degradation. This Mus musculus (Mouse) protein is Protein phosphatase 1H (Ppm1h).